The primary structure comprises 279 residues: 3-methyl-2-oxobutanoate hydroxymethyltransferase (279 aa).

Mg(2+) contacts are provided by Asp-43 and Asp-82. Residues 43–44, Asp-82, and Lys-112 each bind 3-methyl-2-oxobutanoate; that span reads DS. Glu-114 contributes to the Mg(2+) binding site. The active-site Proton acceptor is the Glu-181.

The protein belongs to the PanB family. As to quaternary structure, homodecamer; pentamer of dimers. The cofactor is Mg(2+).

It is found in the cytoplasm. It carries out the reaction 3-methyl-2-oxobutanoate + (6R)-5,10-methylene-5,6,7,8-tetrahydrofolate + H2O = 2-dehydropantoate + (6S)-5,6,7,8-tetrahydrofolate. It participates in cofactor biosynthesis; (R)-pantothenate biosynthesis; (R)-pantoate from 3-methyl-2-oxobutanoate: step 1/2. Catalyzes the reversible reaction in which hydroxymethyl group from 5,10-methylenetetrahydrofolate is transferred onto alpha-ketoisovalerate to form ketopantoate. The protein is 3-methyl-2-oxobutanoate hydroxymethyltransferase of Geobacillus thermodenitrificans (strain NG80-2).